The primary structure comprises 521 residues: Bifunctional purine biosynthesis protein PurH (521 aa).

The 145-residue stretch at 1 to 145 folds into the MGS-like domain; that stretch reads MIKQALISVS…KNHRDVTVVV (145 aa).

Belongs to the PurH family.

It catalyses the reaction (6R)-10-formyltetrahydrofolate + 5-amino-1-(5-phospho-beta-D-ribosyl)imidazole-4-carboxamide = 5-formamido-1-(5-phospho-D-ribosyl)imidazole-4-carboxamide + (6S)-5,6,7,8-tetrahydrofolate. The catalysed reaction is IMP + H2O = 5-formamido-1-(5-phospho-D-ribosyl)imidazole-4-carboxamide. Its pathway is purine metabolism; IMP biosynthesis via de novo pathway; 5-formamido-1-(5-phospho-D-ribosyl)imidazole-4-carboxamide from 5-amino-1-(5-phospho-D-ribosyl)imidazole-4-carboxamide (10-formyl THF route): step 1/1. It functions in the pathway purine metabolism; IMP biosynthesis via de novo pathway; IMP from 5-formamido-1-(5-phospho-D-ribosyl)imidazole-4-carboxamide: step 1/1. This chain is Bifunctional purine biosynthesis protein PurH, found in Burkholderia pseudomallei (strain 1710b).